The chain runs to 256 residues: Ras-related protein Rab-26 (256 aa).

Residues 1 to 53 form a disordered region; that stretch reads MSRKKTPKSKAGSAPATSALPAANGPRPVRPGTARPGPEAPPNGPPQPGRSSV. Over residues 38–48 the composition is skewed to pro residues; the sequence is PEAPPNGPPQP. Positions 72, 73, 74, 75, 76, 77, 78, 95, and 96 each coordinate GTP. Thr77 is a Mg(2+) binding site. 2 short sequence motifs (switch) span residues 86 to 101 and 119 to 136; these read GAFL…GIDF and DTAG…YYRD. Residues Thr96 and Asp119 each coordinate Mg(2+). Residues Gly122, Asn177, Lys178, Asp180, Ala208, and Lys209 each contribute to the GTP site. Residues Cys253 and Cys254 are each lipidated (S-geranylgeranyl cysteine).

The protein belongs to the small GTPase superfamily. Rab family. Mg(2+) is required as a cofactor.

Its subcellular location is the cell membrane. The catalysed reaction is GTP + H2O = GDP + phosphate + H(+). With respect to regulation, regulated by guanine nucleotide exchange factors (GEFs) which promote the exchange of bound GDP for free GTP. Regulated by GTPase activating proteins (GAPs) which increase the GTP hydrolysis activity. Inhibited by GDP dissociation inhibitors (GDIs). Functionally, the small GTPases Rab are key regulators of intracellular membrane trafficking, from the formation of transport vesicles to their fusion with membranes. Rabs cycle between an inactive GDP-bound form and an active GTP-bound form that is able to recruit to membranes different set of downstream effectors directly responsible for vesicle formation, movement, tethering and fusion. RAB26 mediates transport of ADRA2A and ADRA2B from the Golgi to the cell membrane. Plays a role in the maturation of zymogenic granules and in pepsinogen secretion in the stomach. Plays a role in the secretion of amylase from acinar granules in the parotid gland. This chain is Ras-related protein Rab-26 (RAB26), found in Bos taurus (Bovine).